We begin with the raw amino-acid sequence, 462 residues long: Sensor histidine kinase ZraS (462 aa).

The Cytoplasmic portion of the chain corresponds to 1-14 (MNVMRLSKDSVAVG). A helical transmembrane segment spans residues 15-35 (LSWLLTGLILLLVCLFSALIV). The Periplasmic segment spans residues 36–197 (RDYGRENEAA…ADHARGLRNM (162 aa)). The helical transmembrane segment at 198-218 (VIMLCAAGVVMAATVLAQFWF) threads the bilayer. The Cytoplasmic segment spans residues 219 to 462 (RRYQRSRKQL…VNGQQKDEQG (244 aa)). Positions 247–455 (GVAHEIRNPL…LFTFYLPVNG (209 aa)) constitute a Histidine kinase domain. His-250 is modified (phosphohistidine; by autocatalysis).

Autophosphorylated.

The protein localises to the cell inner membrane. The enzyme catalyses ATP + protein L-histidine = ADP + protein N-phospho-L-histidine.. Activity of the ZraS/ZraR two-component system is repressed by the zinc-bound form of ZraP, which probably interacts with the periplasmic region of ZraS. Part of the Zra signaling pathway, an envelope stress response (ESR) system composed of the periplasmic accessory protein ZraP, the histidine kinase ZraS and the transcriptional regulator ZraR. The ZraPSR system contributes to antibiotic resistance and is important for membrane integrity in the presence of membrane-targeting biocides. ZraS is a member of the two-component regulatory system ZraS/ZraR. Functions as a membrane-associated sensor kinase that phosphorylates ZraR in response to high concentrations of Zn(2+) or Pb(2+) in the medium. In Klebsiella oxytoca, this protein is Sensor histidine kinase ZraS (zraS).